Here is a 482-residue protein sequence, read N- to C-terminus: tRNA sulfurtransferase (482 aa).

In terms of domain architecture, THUMP spans 61–165 (LAIRDALTRI…DDRLLLIKGR (105 aa)). Residues 183 to 184 (LI), Lys-265, Gly-287, and Gln-296 each bind ATP. Cys-344 and Cys-456 are disulfide-bonded. One can recognise a Rhodanese domain in the interval 404–482 (FGPNDVILDI…GFNNVKVYRL (79 aa)). Catalysis depends on Cys-456, which acts as the Cysteine persulfide intermediate.

This sequence belongs to the ThiI family.

It is found in the cytoplasm. It catalyses the reaction [ThiI sulfur-carrier protein]-S-sulfanyl-L-cysteine + a uridine in tRNA + 2 reduced [2Fe-2S]-[ferredoxin] + ATP + H(+) = [ThiI sulfur-carrier protein]-L-cysteine + a 4-thiouridine in tRNA + 2 oxidized [2Fe-2S]-[ferredoxin] + AMP + diphosphate. The enzyme catalyses [ThiS sulfur-carrier protein]-C-terminal Gly-Gly-AMP + S-sulfanyl-L-cysteinyl-[cysteine desulfurase] + AH2 = [ThiS sulfur-carrier protein]-C-terminal-Gly-aminoethanethioate + L-cysteinyl-[cysteine desulfurase] + A + AMP + 2 H(+). It functions in the pathway cofactor biosynthesis; thiamine diphosphate biosynthesis. Functionally, catalyzes the ATP-dependent transfer of a sulfur to tRNA to produce 4-thiouridine in position 8 of tRNAs, which functions as a near-UV photosensor. Also catalyzes the transfer of sulfur to the sulfur carrier protein ThiS, forming ThiS-thiocarboxylate. This is a step in the synthesis of thiazole, in the thiamine biosynthesis pathway. The sulfur is donated as persulfide by IscS. In Shigella boydii serotype 18 (strain CDC 3083-94 / BS512), this protein is tRNA sulfurtransferase.